The primary structure comprises 476 residues: Eukaryotic translation initiation factor 3 subunit L (476 aa).

The PCI domain occupies 257–452 (DAIRMFSHIL…DLDYALENDL (196 aa)).

The protein belongs to the eIF-3 subunit L family. As to quaternary structure, component of the eukaryotic translation initiation factor 3 (eIF-3) complex.

Its subcellular location is the cytoplasm. Component of the eukaryotic translation initiation factor 3 (eIF-3) complex, which is involved in protein synthesis of a specialized repertoire of mRNAs and, together with other initiation factors, stimulates binding of mRNA and methionyl-tRNAi to the 40S ribosome. The eIF-3 complex specifically targets and initiates translation of a subset of mRNAs involved in cell proliferation. This chain is Eukaryotic translation initiation factor 3 subunit L, found in Aspergillus oryzae (strain ATCC 42149 / RIB 40) (Yellow koji mold).